The primary structure comprises 832 residues: Valine--tRNA ligase (832 aa).

The short motif at 41-51 (PNVTGKLHLGH) is the 'HIGH' region element. The 'KMSKS' region motif lies at 512 to 516 (KMSKS). K515 serves as a coordination point for ATP. The stretch at 760–831 (FIEISQEQKQ…QIYLEELKWK (72 aa)) forms a coiled coil.

Belongs to the class-I aminoacyl-tRNA synthetase family. ValS type 1 subfamily. As to quaternary structure, monomer.

Its subcellular location is the cytoplasm. The enzyme catalyses tRNA(Val) + L-valine + ATP = L-valyl-tRNA(Val) + AMP + diphosphate. In terms of biological role, catalyzes the attachment of valine to tRNA(Val). As ValRS can inadvertently accommodate and process structurally similar amino acids such as threonine, to avoid such errors, it has a 'posttransfer' editing activity that hydrolyzes mischarged Thr-tRNA(Val) in a tRNA-dependent manner. This Mycoplasmopsis synoviae (strain 53) (Mycoplasma synoviae) protein is Valine--tRNA ligase.